A 120-amino-acid chain; its full sequence is Nascent polypeptide-associated complex protein (120 aa).

Residues 12-80 (GMNPAKMKQM…VKEVPKSLEI (69 aa)) form the NAC-A/B domain.

Belongs to the NAC-alpha family. As to quaternary structure, homodimer. Interacts with the ribosome. Binds ribosomal RNA.

Contacts the emerging nascent chain on the ribosome. The protein is Nascent polypeptide-associated complex protein of Methanosarcina mazei (strain ATCC BAA-159 / DSM 3647 / Goe1 / Go1 / JCM 11833 / OCM 88) (Methanosarcina frisia).